The chain runs to 335 residues: Serine/threonine-protein kinase crk1 (335 aa).

The Protein kinase domain maps to 11-292 (YVKERKVGEG…AQQALEHHYF (282 aa)). ATP contacts are provided by residues 17–25 (VGEGTYAVV) and Lys-40. The Proton acceptor role is filled by Asp-133. At Ser-162 the chain carries Phosphoserine. Phosphoserine; by CAK is present on Ser-165. Ser-318 carries the phosphoserine modification.

It belongs to the protein kinase superfamily. CMGC Ser/Thr protein kinase family. CDC2/CDKX subfamily. In terms of assembly, one of the nine subunits forming the core-TFIIH basal transcription factor. Interacts with mcs2 and tfb3.

Its subcellular location is the cytoplasm. It is found in the nucleus. The enzyme catalyses [DNA-directed RNA polymerase] + ATP = phospho-[DNA-directed RNA polymerase] + ADP + H(+). In terms of biological role, protein kinase essential for cell proliferation, where it is required for completion of cytokinesis. Phosphorylates the C-terminal repeat domain (CTD) of RNA polymerase II. The chain is Serine/threonine-protein kinase crk1 (crk1) from Schizosaccharomyces pombe (strain 972 / ATCC 24843) (Fission yeast).